The primary structure comprises 634 residues: Kelch-like protein 22 (634 aa).

Ala-2 bears the N-acetylalanine mark. One can recognise a BTB domain in the interval 50-117 (FDVVLVVEGR…IYTSELELSL (68 aa)). Kelch repeat units lie at residues 299-349 (CVVG…VLNN), 350-399 (FVYL…VVGK), 400-446 (YIYA…TLQG), 448-493 (MYIT…ALLD), 494-544 (KLFV…VLDN), and 545-593 (RIYV…VLTL). Thr-463 is modified (phosphothreonine). A Phosphotyrosine modification is found at Tyr-466. Thr-475 is subject to Phosphothreonine. Residues 600 to 634 (EQPRGTPNRSQADADFASEVMSVSDWEEFDNSSED) form a disordered region. Residue Thr-605 is modified to Phosphothreonine. Residues 624–634 (DWEEFDNSSED) are compositionally biased toward acidic residues.

As to quaternary structure, component of the BCR(KLHL22) E3 ubiquitin ligase complex, at least composed of CUL3, KLHL22 and RBX1. Interacts with PLK1. Interacts with DEPDC5 (via DEP domain); the interaction depends on amino acid availability. Interacts with YWHAE; required for the nuclear localization of KLHL22 upon amino acid starvation.

It localises to the cytoplasm. The protein localises to the cytosol. It is found in the cytoskeleton. Its subcellular location is the microtubule organizing center. The protein resides in the centrosome. It localises to the spindle. The protein localises to the nucleus. It is found in the lysosome. It participates in protein modification; protein ubiquitination. Substrate-specific adapter of a BCR (BTB-CUL3-RBX1) E3 ubiquitin ligase complex required for chromosome alignment and localization of PLK1 at kinetochores. The BCR(KLHL22) ubiquitin ligase complex mediates monoubiquitination of PLK1, leading to PLK1 dissociation from phosphoreceptor proteins and subsequent removal from kinetochores, allowing silencing of the spindle assembly checkpoint (SAC) and chromosome segregation. Monoubiquitination of PLK1 does not lead to PLK1 degradation. The BCR(KLHL22) ubiquitin ligase complex is also responsible for the amino acid-stimulated 'Lys-48' polyubiquitination and proteasomal degradation of DEPDC5. Through the degradation of DEPDC5, releases the GATOR1 complex-mediated inhibition of the TORC1 pathway. It is therefore an amino acid-dependent activator within the amino acid-sensing branch of the TORC1 pathway, indirectly regulating different cellular processes including cell growth and autophagy. This Rattus norvegicus (Rat) protein is Kelch-like protein 22.